The primary structure comprises 97 residues: Eclosion hormone (97 aa).

The N-terminal stretch at 1–17 (MNCKPLILCTFVAVAMC) is a signal peptide. Disulfide bonds link C48–C72, C52–C68, and C55–C83.

Belongs to the insect eclosion hormone family. As to expression, expressed in a single pair of brain neurons which extend their processes the entire length of the central nervous system and also to the corpora cardiaca portion of the ring gland. These cells show massive depletion of immunoreactive Eh at ecdysis.

The protein localises to the secreted. In terms of biological role, neuropeptide that triggers the performance of ecdysis behaviors at the end of a molt. It triggers adult behavior patterns: larval, pupal and adult ecdysis, and plasticization during the molt. In Drosophila melanogaster (Fruit fly), this protein is Eclosion hormone (Eh).